We begin with the raw amino-acid sequence, 508 residues long: Light-independent protochlorophyllide reductase subunit B (508 aa).

Aspartate 36 serves as a coordination point for [4Fe-4S] cluster. Aspartate 294 functions as the Proton donor in the catalytic mechanism. Residue 429–430 (GM) coordinates substrate.

Belongs to the ChlB/BchB/BchZ family. In terms of assembly, protochlorophyllide reductase is composed of three subunits; ChlL, ChlN and ChlB. Forms a heterotetramer of two ChlB and two ChlN subunits. It depends on [4Fe-4S] cluster as a cofactor.

The catalysed reaction is chlorophyllide a + oxidized 2[4Fe-4S]-[ferredoxin] + 2 ADP + 2 phosphate = protochlorophyllide a + reduced 2[4Fe-4S]-[ferredoxin] + 2 ATP + 2 H2O. Its pathway is porphyrin-containing compound metabolism; chlorophyll biosynthesis (light-independent). Its function is as follows. Component of the dark-operative protochlorophyllide reductase (DPOR) that uses Mg-ATP and reduced ferredoxin to reduce ring D of protochlorophyllide (Pchlide) to form chlorophyllide a (Chlide). This reaction is light-independent. The NB-protein (ChlN-ChlB) is the catalytic component of the complex. The chain is Light-independent protochlorophyllide reductase subunit B from Gloeothece citriformis (strain PCC 7424) (Cyanothece sp. (strain PCC 7424)).